Here is a 626-residue protein sequence, read N- to C-terminus: tRNA uridine 5-carboxymethylaminomethyl modification enzyme MnmG (626 aa).

13-18 (GGGHAG) serves as a coordination point for FAD. 273–287 (GPRYCPSIEDKIHRF) contacts NAD(+).

This sequence belongs to the MnmG family. In terms of assembly, homodimer. Heterotetramer of two MnmE and two MnmG subunits. FAD serves as cofactor.

Its subcellular location is the cytoplasm. NAD-binding protein involved in the addition of a carboxymethylaminomethyl (cmnm) group at the wobble position (U34) of certain tRNAs, forming tRNA-cmnm(5)s(2)U34. The chain is tRNA uridine 5-carboxymethylaminomethyl modification enzyme MnmG from Acinetobacter baumannii (strain AB307-0294).